A 365-amino-acid chain; its full sequence is Eukaryotic translation initiation factor 3 subunit H (365 aa).

One can recognise an MPN domain in the interval 11-160 (VKVEALVVMK…LRAFRLSPKF (150 aa)).

The protein belongs to the eIF-3 subunit H family. Component of the eukaryotic translation initiation factor 3 (eIF-3) complex.

It is found in the cytoplasm. Its function is as follows. Component of the eukaryotic translation initiation factor 3 (eIF-3) complex, which is involved in protein synthesis of a specialized repertoire of mRNAs and, together with other initiation factors, stimulates binding of mRNA and methionyl-tRNAi to the 40S ribosome. The eIF-3 complex specifically targets and initiates translation of a subset of mRNAs involved in cell proliferation. This is Eukaryotic translation initiation factor 3 subunit H from Aspergillus fumigatus (strain CBS 144.89 / FGSC A1163 / CEA10) (Neosartorya fumigata).